The following is a 315-amino-acid chain: Cytoplasmic dynein intermediate light chain DYN3 (315 aa).

The protein belongs to the dynein light intermediate chain DYN3 family. In terms of assembly, the cytoplasmic dynein is composed of at least two heavy chains and a number of intermediate and light chains.

The protein localises to the cytoplasm. It localises to the cytoskeleton. Its function is as follows. Component of the cytoplasmic dynein which acts as a motor for the intracellular retrograde motility of vesicles and organelles along microtubules. May play an important role in the proper orientation of the mitotic spindle into the budding daughter cell yeast. Probably required for normal progression of the cell cycle. This chain is Cytoplasmic dynein intermediate light chain DYN3 (DYN3), found in Candida glabrata (strain ATCC 2001 / BCRC 20586 / JCM 3761 / NBRC 0622 / NRRL Y-65 / CBS 138) (Yeast).